Consider the following 472-residue polypeptide: FAD-linked oxidoreductase azaL (472 aa).

An N-terminal signal peptide occupies residues 1-18; it reads MFRTILLCSLGLTTLSSA. Residues Asn22, Asn44, Asn102, Asn123, Asn227, Asn246, Asn273, Asn305, Asn318, Asn390, and Asn415 are each glycosylated (N-linked (GlcNAc...) asparagine). Positions 54 to 228 constitute an FAD-binding PCMH-type domain; sequence TTYDAPTYIG…TSATYKIYNA (175 aa).

Belongs to the oxygen-dependent FAD-linked oxidoreductase family.

The protein operates within secondary metabolite biosynthesis. FAD-linked oxidoreductase; part of the gene cluster that mediates the biosynthesis of azaphilones, a class of fungal metabolites characterized by a highly oxygenated pyrano-quinone bicyclic core and exhibiting a broad range of bioactivities. In the first step, the non-reducing polyketide synthase azaA forms the hexaketide precursor from successive condensations of five malonyl-CoA units, presumably with a simple acetyl-CoA starter unit. The reactive polyketide chain then undergoes a PT-mediated C2-C7 cyclization to afford the aromatic ring and is eventually released as an aldehyde through the R-domain. The putative ketoreductase azaE is proposed to catalyze the reduction of the terminal ketone resulting in the early culture product FK17-P2a. The monooxygenase azaH was demonstrated to be the only enzyme required to convert FK17-P2a to azanigerone E. AzaH first hydroxylates the benzaldehyde intermediate FK17-P2a at C4, which triggers the formation of the pyran-ring to afford azanigerone E. In parallel, the 2,4-dimethylhexanoyl chain is synthesized by the HR-PKS azaB and is proposed to be transferred to the C4-hydroxyl of azanigerone E by the acyltransferase azaD directly from the ACP domain of azaB. Alternatively, the 2,4-dimethyl-hexanoyl chain may be offloaded from the HR-PKS as a carboxylic acid and converted to an acyl-CoA by azaF. The resulting acyl-CoA molecule could then be taken up as a substrate by AzaD to form azanigerone B. To yield the carboxylic acid substituent in azanigerone A, the hydroxypropyl side chain of azanigerone B would need to undergo a C-C oxidative cleavage catalyzed by cytochrome P450 AzaI. AzaI is proposed to act on a vicinal diol that leads to a C-C bond scission either through an alkoxyradical intermediate or a peroxy complex. In the biosynthesis of azanigerone A, azanigerone B first undergoes hydroxylation at C10, possibly catalyzed by one of the two FAD-dependent monooxygenases encoded in the cluster, azaG or azaL, resulting in the vicinal diol azanigerone C. Oxidative cleavage of azanigerone C by azaI would yield the corresponding aldehyde derivative of azanigerone A. Finally, the dehydrogenase azaJ is proposed to convert the aldehyde functional group into the carboxylic acid, completing the conversion from azanigerone B to azanigerone A. Alternatively, the oxidation of aldehyde to carboxylic acid may be catalyzed by the same P450 enzyme azaI via consecutive oxidation or by endogenous alcohol dehydrogenase. The sequence is that of FAD-linked oxidoreductase azaL from Aspergillus niger (strain ATCC 1015 / CBS 113.46 / FGSC A1144 / LSHB Ac4 / NCTC 3858a / NRRL 328 / USDA 3528.7).